The following is a 140-amino-acid chain: Large-conductance mechanosensitive channel (140 aa).

The next 2 membrane-spanning stretches (helical) occupy residues alanine 9–phenylalanine 29 and glycine 86–valine 106.

The protein belongs to the MscL family. In terms of assembly, homopentamer.

It is found in the cell inner membrane. Channel that opens in response to stretch forces in the membrane lipid bilayer. May participate in the regulation of osmotic pressure changes within the cell. This chain is Large-conductance mechanosensitive channel, found in Anaeromyxobacter dehalogenans (strain 2CP-1 / ATCC BAA-258).